The primary structure comprises 48 residues: Sperm protamine P1 (48 aa).

This sequence belongs to the protamine P1 family. In terms of tissue distribution, testis.

Its subcellular location is the nucleus. The protein localises to the chromosome. Protamines substitute for histones in the chromatin of sperm during the haploid phase of spermatogenesis. They compact sperm DNA into a highly condensed, stable and inactive complex. This chain is Sperm protamine P1 (PRM1), found in Monophyllus redmani (Greater Antillean long-tongued bat).